Reading from the N-terminus, the 171-residue chain is Thioredoxin-2 (171 aa).

Positions 41 to 169 (AFNASPSTSQ…LQALISANHP (129 aa)) constitute a Thioredoxin domain. Cysteine 95 and cysteine 98 are joined by a disulfide.

The protein belongs to the thioredoxin family.

Its subcellular location is the cytoplasm. It localises to the vacuole. Functionally, thioredoxin involved in responses to oxidative and cell wall stresses. Plays an important role in appressorium formation on hyphal tips. TRX2 may affect invasive growth via the MST11-MST7-PMK1 pathway since it is required for the proper folding or dimerization of MAPKK MST7. The protein is Thioredoxin-2 of Pyricularia oryzae (strain 70-15 / ATCC MYA-4617 / FGSC 8958) (Rice blast fungus).